The following is a 577-amino-acid chain: Proline--tRNA ligase (577 aa).

Belongs to the class-II aminoacyl-tRNA synthetase family. ProS type 1 subfamily. In terms of assembly, homodimer.

It localises to the cytoplasm. The catalysed reaction is tRNA(Pro) + L-proline + ATP = L-prolyl-tRNA(Pro) + AMP + diphosphate. Catalyzes the attachment of proline to tRNA(Pro) in a two-step reaction: proline is first activated by ATP to form Pro-AMP and then transferred to the acceptor end of tRNA(Pro). As ProRS can inadvertently accommodate and process non-cognate amino acids such as alanine and cysteine, to avoid such errors it has two additional distinct editing activities against alanine. One activity is designated as 'pretransfer' editing and involves the tRNA(Pro)-independent hydrolysis of activated Ala-AMP. The other activity is designated 'posttransfer' editing and involves deacylation of mischarged Ala-tRNA(Pro). The misacylated Cys-tRNA(Pro) is not edited by ProRS. This Helicobacter pylori (strain G27) protein is Proline--tRNA ligase.